The following is a 305-amino-acid chain: Protoheme IX farnesyltransferase (305 aa).

9 consecutive transmembrane segments (helical) span residues 29–49, 51–71, 101–121, 123–143, 151–171, 177–197, 221–241, 244–264, and 283–303; these read VTQL…PGMV, WSVL…AFAI, TLIF…VFAN, LTMW…TILL, IVIG…AVSG, AWFL…ALAL, LLHI…PFVY, SGYI…GYAW, and ILYL…KFVP.

It belongs to the UbiA prenyltransferase family. Protoheme IX farnesyltransferase subfamily.

The protein localises to the cell inner membrane. The enzyme catalyses heme b + (2E,6E)-farnesyl diphosphate + H2O = Fe(II)-heme o + diphosphate. It participates in porphyrin-containing compound metabolism; heme O biosynthesis; heme O from protoheme: step 1/1. In terms of biological role, converts heme B (protoheme IX) to heme O by substitution of the vinyl group on carbon 2 of heme B porphyrin ring with a hydroxyethyl farnesyl side group. The polypeptide is Protoheme IX farnesyltransferase (Cupriavidus metallidurans (strain ATCC 43123 / DSM 2839 / NBRC 102507 / CH34) (Ralstonia metallidurans)).